A 942-amino-acid polypeptide reads, in one-letter code: Chitin synthase 4 (942 aa).

A disordered region spans residues 1–124; the sequence is MPPRYPFGGG…FDEHDGDVPL (124 aa). Basic and acidic residues predominate over residues 14-26; sequence DEAHHQPLERRTT. Residues 27–36 are compositionally biased toward polar residues; that stretch reads AEAQGNSFTH. Asn-604 carries N-linked (GlcNAc...) asparagine glycosylation. Helical transmembrane passes span 641–661, 674–694, 709–729, 755–775, 783–803, 885–905, and 909–929; these read TIQLIFSWFGMANFFIAFFIL, VPNLVLSYIYVAFIIFCFLLS, AMVVFALLTVYMTGAAIYLAV, IVISLAATFGIWLIASIMFLE, IVQYLLMAPTFVNVISIYAFA, VLCWSLSNAALVVGILNISSI, and TIYMGFLLYSVAGLALFRMMG.

The protein belongs to the chitin synthase family. Class I subfamily.

The protein resides in the cell membrane. It localises to the cytoplasmic vesicle membrane. The catalysed reaction is [(1-&gt;4)-N-acetyl-beta-D-glucosaminyl](n) + UDP-N-acetyl-alpha-D-glucosamine = [(1-&gt;4)-N-acetyl-beta-D-glucosaminyl](n+1) + UDP + H(+). Its function is as follows. Polymerizes chitin, a structural polymer of the cell wall and septum, by transferring the sugar moiety of UDP-GlcNAc to the non-reducing end of the growing chitin polymer. This chain is Chitin synthase 4, found in Mycosarcoma maydis (Corn smut fungus).